The following is a 23-amino-acid chain: Acidic phospholipase A2 CTs-A2 (23 aa).

The cofactor is Ca(2+). Contains 7 disulfide bonds. Expressed by the venom gland.

The protein localises to the secreted. It carries out the reaction a 1,2-diacyl-sn-glycero-3-phosphocholine + H2O = a 1-acyl-sn-glycero-3-phosphocholine + a fatty acid + H(+). Snake venom phospholipase A2 (PLA2) that shows a moderate inhibition of ADP-induced human platelet aggregation when tested on platelet rich plasma. Exhibits moderate hydrolytic activities and prefers the anionic micelles (dPPC with deoxycholate) to the zwitterionic micelles (dPPC with Triton X-100). PLA2 catalyzes the calcium-dependent hydrolysis of the 2-acyl groups in 3-sn-phosphoglycerides. The sequence is that of Acidic phospholipase A2 CTs-A2 from Trimeresurus stejnegeri (Chinese green tree viper).